The primary structure comprises 123 residues: Defensin beta 118 (123 aa).

An N-terminal signal peptide occupies residues 1–19 (MKLLLLALPVLVLLPQVIP). 3 cysteine pairs are disulfide-bonded: C27–C54, C34–C48, and C38–C55. The propeptide occupies 65–123 (VPMTSPTPLSDSTPGIIDDILTVRFTTDYFEVSSKKDMVEESEAGRGTETSLPNVHHSS). Basic and acidic residues predominate over residues 100–110 (KDMVEESEAGR). The interval 100–123 (KDMVEESEAGRGTETSLPNVHHSS) is disordered. A compositionally biased stretch (polar residues) spans 112–123 (TETSLPNVHHSS).

The protein belongs to the beta-defensin family. Post-translationally, the three-dimensional structure formed by the three intramolecular disulfide bridges is indispensable for antimicrobial activity.

Its subcellular location is the secreted. Host defense peptide that exhibits antimicrobial activity against both Gram-negative bacteria, such as E.coli and S.typhimurium, and Gram-positive bacteria, such as S.aureus and B.subtilis. Inhibits cell adhesion of E.coli on intestinal epithelial enterocytes. Causes rapid permeabilization of both the outer and inner membrane of E.coli, leading to morphological alterations on the bacterial surface. Binds to bacterial lipopolysaccharides (LPS) with high affinity, and may thereby be involved in immunoregulation through LPS neutralization. May contribute to epididymal innate immunity and protect the sperm against attack by microorganisms. The chain is Defensin beta 118 (DEFB118) from Pan troglodytes (Chimpanzee).